Reading from the N-terminus, the 169-residue chain is Ureidoglycolate lyase (169 aa).

Belongs to the ureidoglycolate lyase family. Homodimer. Requires Ni(2+) as cofactor.

The enzyme catalyses (S)-ureidoglycolate = urea + glyoxylate. The protein operates within nitrogen metabolism; (S)-allantoin degradation. In terms of biological role, catalyzes the catabolism of the allantoin degradation intermediate (S)-ureidoglycolate, generating urea and glyoxylate. Involved in the utilization of allantoin as nitrogen source. The protein is Ureidoglycolate lyase of Brucella anthropi (strain ATCC 49188 / DSM 6882 / CCUG 24695 / JCM 21032 / LMG 3331 / NBRC 15819 / NCTC 12168 / Alc 37) (Ochrobactrum anthropi).